A 422-amino-acid chain; its full sequence is Bifunctional enzyme IspD/IspF (422 aa).

Residues 1 to 267 (MAVGLLLLAA…PISALSMPLP (267 aa)) are 2-C-methyl-D-erythritol 4-phosphate cytidylyltransferase. The tract at residues 268-422 (LIGVGIDFHK…AIAVAQIYHR (155 aa)) is 2-C-methyl-D-erythritol 2,4-cyclodiphosphate synthase. Positions 274 and 276 each coordinate a divalent metal cation. Residues 274-276 (DFH) and 301-302 (HS) each bind 4-CDP-2-C-methyl-D-erythritol 2-phosphate. Position 309 (His-309) interacts with a divalent metal cation. 4-CDP-2-C-methyl-D-erythritol 2-phosphate-binding positions include 323–325 (DIG), Phe-404, and Arg-407.

This sequence in the N-terminal section; belongs to the IspD/TarI cytidylyltransferase family. IspD subfamily. In the C-terminal section; belongs to the IspF family. A divalent metal cation is required as a cofactor.

The catalysed reaction is 2-C-methyl-D-erythritol 4-phosphate + CTP + H(+) = 4-CDP-2-C-methyl-D-erythritol + diphosphate. The enzyme catalyses 4-CDP-2-C-methyl-D-erythritol 2-phosphate = 2-C-methyl-D-erythritol 2,4-cyclic diphosphate + CMP. The protein operates within isoprenoid biosynthesis; isopentenyl diphosphate biosynthesis via DXP pathway; isopentenyl diphosphate from 1-deoxy-D-xylulose 5-phosphate: step 2/6. It functions in the pathway isoprenoid biosynthesis; isopentenyl diphosphate biosynthesis via DXP pathway; isopentenyl diphosphate from 1-deoxy-D-xylulose 5-phosphate: step 4/6. Bifunctional enzyme that catalyzes the formation of 4-diphosphocytidyl-2-C-methyl-D-erythritol from CTP and 2-C-methyl-D-erythritol 4-phosphate (MEP) (IspD), and catalyzes the conversion of 4-diphosphocytidyl-2-C-methyl-D-erythritol 2-phosphate (CDP-ME2P) to 2-C-methyl-D-erythritol 2,4-cyclodiphosphate (ME-CPP) with a corresponding release of cytidine 5-monophosphate (CMP) (IspF). The sequence is that of Bifunctional enzyme IspD/IspF from Tropheryma whipplei (strain TW08/27) (Whipple's bacillus).